The chain runs to 797 residues: MAMGPPPEDGTVAVVVRVRPPTPSERDGAAHPVLHVVDQHILVFDPEEPGGPPGAALPPRGPKHRGKDLKFVFDRVFGEGATQEEVFQHTTREVLDGVLNGYNCSVFAYGATGAGKTYTMLGSEQSPGIMYLTMAELYRRIEARRDEKSCEVLVSYQEVYNEQIHDLLEPKGPLAIREDPEKGVVVQGLSFHQPKSAEQLLEMLANGNKNRTQHPTDANATSSRSHAVFQIYVKQQDRVVGLSQDLQVAKMSLIDLAGSERASVTNTKGERLREGANINRSLLALINVINALADAKSKKTHIPYRDSKLTRLLKDSIGGNCRTIMIAAVSPSSLAYEDTYNTLKYANRAKEIKLSLKSNVLSLDCHISKYATICEQLKTEVADLQAKLRAYEDAARDAGKQIPALLPPPRMEEAVPESCSAPNVCRESDGEQQELGAGQDAQLGGEEEVLEEMPPSSPSPTQQTDLQLGMKKPNRLPQRLSRSHTEMLMATILSVAQKQYSLLKAANLLTPDMVSEFEELQLLVQKEAAVSPQPTDTSGAPPALRTQRGCDASPSTLSAEPSVPTTRAALRRLQQLTALSSPKLVAKKRRRSEMSNTSRLETPHSLNTRAKRQRKSSPLSAGGEVEAQRSPHTPCLKEPQSPPLLPCCTPKICPLTVTKRRAPLMTSAAQNCCTPTVCDLNVTYSLSEDVAKPGALSLPRFPGWENAPCALKKQEGPFVPRASIPVFSMKGSSIPKPSSISKGSVQKRRGAVSNASRSLGGIQSHITSSSSRRSAQPQSIPEHPPPGLTWKGRSGPR.

The region spanning 11–352 is the Kinesin motor domain; sequence TVAVVVRVRP…LKYANRAKEI (342 aa). ATP is bound at residue 110–117; the sequence is GATGAGKT. Positions 367-402 form a coiled coil; sequence ISKYATICEQLKTEVADLQAKLRAYEDAARDAGKQI. 4 disordered regions span residues 412–476, 528–564, 579–640, and 730–797; these read EEAV…PNRL, AAVS…PSVP, LSSP…KEPQ, and KGSS…SGPR. Residues 594–608 are compositionally biased toward polar residues; that stretch reads MSNTSRLETPHSLNT. The segment covering 731-744 has biased composition (low complexity); that stretch reads GSSIPKPSSISKGS.

It belongs to the TRAFAC class myosin-kinesin ATPase superfamily. Kinesin family.

Its subcellular location is the nucleus. The protein resides in the cytoplasm. The protein localises to the cytoskeleton. Functionally, may play an important role in microtubule plus-end depolymerizing activity in mitotic cells. This chain is Kinesin-like protein KIF18B (KIF18B), found in Gallus gallus (Chicken).